The primary structure comprises 987 residues: MGVKQLLSEAQRNELMDLSRLTEWDLVTFRTFSKHDLHLILKHRRGYNRLGFALRLVLIRYPGWSLTEYKDIPQYVVAYVTSRLRIPPEEFLVYAKRGNTLWEHLGEIRTEYGYQNFSSEYKETLLQFLVQQAMDNNNTLYLIEITISTLRKTKVILPAMYVIEDIVWEAKQQADQKVYSILHDGLVQEQKDQLDALLLPTINGKSPLAWLKDVPAQPSPESFLKVIDRLQFVQKIGLTIDTTKINTNRLRQLARLGSKYEPYAFRRFNEVKRYSMLVSFLLEITQDLIDYAIEIHDRLMMNLQTKGKKEQDEIQQANGKKLNEKILQFITVCGTLIEAKETGKDAFAALDEVMSWNEMVESVEEAKQLSRPLNYDYLDLLNTRYSYVRRYAPTLLRSLHFRATKSGEPVLQALDTIHELNETGKRKVPHGAPLHFVSNRWQKHVYDDDGNINRHYYELAALTELRNHIRSGDIFVSGSRHHKAFDDYLIPYDEWNEVSNIPNGLTAPLKAEDYITDRINRLNEHLEWLSKNSEKLEGVDISQGKLHVERLDRGTPEEAKAFSKLLHSMLPRIKLTDLLIEVASWTGFHDQFIHASTNQSPDQEEQNIVLATLMAMGTNIGLTKMAEATPGISYRQMANASQWRMYDDAMVRAQSILVNFQKEQKLSSYWGDGTTSSSDGMRLSIAVRSLHADSNPHYGTGKGGTIYRFVSDQLSAYHVKVITTNARDALHVLDGLLHHETDLKIEEHYTDTAGYTDQVFALTHLLGFRFAPRIRDLADTKLFSIPGGEEYENVQALLKGKINVKLIKENYEDIRRLAYSVQTGKVSSALIMGKLGSYARQNKLATALGEMGRIEKTLFTLDYISNKAVRRRVQKGLNKGEAINALARTIFFGQRGEFRERALQDQLQRASALNIIINAISVWNTVYMEKAVEELKARGEFREDLMPYAWPLGWEHINFLGEYKFEGLHDTGQMNLRPLRIKEPFYS.

It belongs to the transposase 7 family.

Its function is as follows. Required for transposition of transposon Tn4430. The sequence is that of Transposase for transposon Tn4430 (tnpA) from Bacillus thuringiensis.